The following is a 252-amino-acid chain: 5'-nucleotidase SurE (252 aa).

Positions 8, 9, 39, and 91 each coordinate a divalent metal cation.

It belongs to the SurE nucleotidase family. Requires a divalent metal cation as cofactor.

The protein resides in the cytoplasm. The catalysed reaction is a ribonucleoside 5'-phosphate + H2O = a ribonucleoside + phosphate. Functionally, nucleotidase that shows phosphatase activity on nucleoside 5'-monophosphates. The polypeptide is 5'-nucleotidase SurE (Bordetella petrii (strain ATCC BAA-461 / DSM 12804 / CCUG 43448)).